The sequence spans 149 residues: Putative glycine cleavage system H protein 3 (149 aa).

Positions 39-121 (TCTLGITKYA…EDKGWLIKME (83 aa)) constitute a Lipoyl-binding domain. An N6-lipoyllysine modification is found at K80.

It belongs to the GcvH family. As to quaternary structure, the glycine cleavage system is composed of four proteins: P, T, L and H. (R)-lipoate is required as a cofactor.

Functionally, the glycine cleavage system catalyzes the degradation of glycine. The H protein shuttles the methylamine group of glycine from the P protein to the T protein. This Dictyostelium discoideum (Social amoeba) protein is Putative glycine cleavage system H protein 3 (gcvH3).